The following is a 368-amino-acid chain: Agmatine deiminase (368 aa).

The Amidino-cysteine intermediate role is filled by Cys-357.

Belongs to the agmatine deiminase family. In terms of assembly, homodimer.

The catalysed reaction is agmatine + H2O = N-carbamoylputrescine + NH4(+). It participates in amine and polyamine biosynthesis; putrescine biosynthesis via agmatine pathway; N-carbamoylputrescine from agmatine: step 1/1. Mediates the hydrolysis of agmatine into N-carbamoylputrescine in the arginine decarboxylase (ADC) pathway of putrescine biosynthesis, a basic polyamine. The chain is Agmatine deiminase from Pseudomonas aeruginosa (strain UCBPP-PA14).